We begin with the raw amino-acid sequence, 161 residues long: MTDSAAEPTISQPQHVVIYTDGACKGNPGPGGWGALLASGGTEKEIFGGEMGTTNNRMEMTAVIEALAALKKPCTVTLYLDSQYVLKGITEWIHGWKARGWRTAAKAPVKNVDLWQRLDALLVSSGHSIDWRWVRGHNGDPGNERADALANKGVERALGRL.

Residues Q12–E155 enclose the RNase H type-1 domain. Residues D21, E59, D81, and D147 each coordinate Mg(2+).

It belongs to the RNase H family. As to quaternary structure, monomer. Requires Mg(2+) as cofactor.

Its subcellular location is the cytoplasm. The enzyme catalyses Endonucleolytic cleavage to 5'-phosphomonoester.. Its function is as follows. Endonuclease that specifically degrades the RNA of RNA-DNA hybrids. In Polaromonas naphthalenivorans (strain CJ2), this protein is Ribonuclease H.